A 479-amino-acid polypeptide reads, in one-letter code: Anaerobic nitric oxide reductase flavorubredoxin (479 aa).

The segment at 30–210 (LRGSSYNSYL…PFSRLVTPKI (181 aa)) is zinc metallo-hydrolase. The Fe cation site is built by H79, E81, D83, H147, D166, and H227. The region spanning 254 to 393 (ITIFYDTMSN…LCREHGREIA (140 aa)) is the Flavodoxin-like domain. Residues 260-264 (TMSNN) and 342-369 (AFGS…EMSL) contribute to the FMN site. In terms of domain architecture, Rubredoxin-like spans 423–474 (GPRMQCSVCQWIYDPAKGEPMQDVAPGTPWSEVPDNFLCPECSLGKDVFDEL). 4 residues coordinate Fe cation: C428, C431, C461, and C464.

It in the N-terminal section; belongs to the zinc metallo-hydrolase group 3 family. In terms of assembly, homotetramer. It depends on Fe cation as a cofactor. The cofactor is FMN.

The protein localises to the cytoplasm. It participates in nitrogen metabolism; nitric oxide reduction. In terms of biological role, anaerobic nitric oxide reductase; uses NADH to detoxify nitric oxide (NO), protecting several 4Fe-4S NO-sensitive enzymes. Has at least 2 reductase partners, only one of which (NorW, flavorubredoxin reductase) has been identified. NO probably binds to the di-iron center; electrons enter from the NorW at rubredoxin and are transferred sequentially to the FMN center and the di-iron center. Also able to function as an aerobic oxygen reductase. This Shigella sonnei (strain Ss046) protein is Anaerobic nitric oxide reductase flavorubredoxin.